The sequence spans 653 residues: Fusexin 1 (653 aa).

A signal peptide spans 1–23 (MKNGLKASVVALFFLLAASSASA). Residues 24-559 (ATNSVDTVTY…MEKALSGNAG (536 aa)) are Extracellular-facing. Cystine bridges form between cysteine 126–cysteine 166, cysteine 397–cysteine 440, cysteine 467–cysteine 490, and cysteine 502–cysteine 519. The fusion loop stretch occupies residues 154-159 (DTWTGQ). A helical membrane pass occupies residues 560 to 580 (ALTWAQLLLSFIGFLAGFALV). The Cytoplasmic portion of the chain corresponds to 581–600 (GVKLGKMVDGLATEFIPLSD). A run of 2 helical transmembrane segments spans residues 601–621 (AVVRLGIGLVGGGMAFMAVYQ) and 622–642 (LVTNPLGFLLTVVGLLLTGYL). Residues 643-653 (YLKGTTPDINL) are Cytoplasmic-facing.

The protein belongs to the HAP2/GCS1 family. Fusexin 1 subfamily. In terms of assembly, homotrimer stabilized by interdomain contacts and numerous Ca(2+) and Na(+) ions.

The protein localises to the cell surface. Its subcellular location is the cell membrane. In terms of biological role, exhibits fusogenic activity. Mediates cell-cell fusion in mammalian cells (bilateral fusion). The protein is Fusexin 1 of Haloferax sp. (strain Q22).